The following is a 295-amino-acid chain: Nucleotide-binding protein PEPE_0450 (295 aa).

An ATP-binding site is contributed by 12-19 (GMSGAGKT). 62 to 65 (DLRS) is a GTP binding site.

Belongs to the RapZ-like family.

Its function is as follows. Displays ATPase and GTPase activities. This Pediococcus pentosaceus (strain ATCC 25745 / CCUG 21536 / LMG 10740 / 183-1w) protein is Nucleotide-binding protein PEPE_0450.